The chain runs to 529 residues: Basal body-orientation factor 1 (529 aa).

The segment covering 1–13 has biased composition (basic residues); it reads MPSKGKDKKKGKS. A disordered region spans residues 1 to 22; the sequence is MPSKGKDKKKGKSRGKDTKKLI. Coiled coils occupy residues 55 to 198 and 271 to 361; these read DTSR…LKQE and IKEK…EVER. The segment at 510 to 529 is disordered; the sequence is GKVVLPTIPKGPQESDTGTF.

It belongs to the BBOF1 family. Interacts with MNS1 and ODF2.

It localises to the cytoplasm. It is found in the cytoskeleton. The protein resides in the cilium basal body. Its subcellular location is the flagellum axoneme. Functionally, plays an essential role in sperm motility and male fertility by stabilizing the sperm flagellar axonemal structure. May be required for the stability of ODF2 and MANS1 proteins. Dispensable for the assembly and function of motile cilia. The protein is Basal body-orientation factor 1 of Macaca fascicularis (Crab-eating macaque).